We begin with the raw amino-acid sequence, 630 residues long: Adagio-like protein 1 (630 aa).

Positions 1–36 (MEWDSESDGAGSIGAGEEEEEEEEEEEGGFGGGGGG) are disordered. Acidic residues predominate over residues 16–28 (GEEEEEEEEEEEG). One can recognise a PAS domain in the interval 48–127 (IEGMLRASGP…SEIRKCIDNG (80 aa)). Cysteine 95 carries the S-4a-FMN cysteine modification. The region spanning 216–262 (SSLFQLTDEVLCQSILSRLSPRDIASVSSVCRRLYLLTRNEDLWRMV) is the F-box domain. 4 Kelch repeats span residues 378–428 (LLVV…TLDG), 430–481 (KLVV…VYGG), 483–535 (KILM…AGPP), and 549–601 (RVLI…VVGG).

It belongs to the ADAGIO family. FMN binds covalently to cysteine after exposure to blue light and is reversed in the dark.

The protein localises to the nucleus. Its pathway is protein modification; protein ubiquitination. In terms of biological role, component of an E3 ubiquitin ligase complex that plays a central role in blue light-dependent circadian cycles. Acts as a blue light photoreceptor, due to the presence of FMN, that mediates light-regulated protein degradation of critical clock components by targeting them to the proteasome complex. This chain is Adagio-like protein 1, found in Oryza sativa subsp. japonica (Rice).